Consider the following 357-residue polypeptide: Enoyl-[acyl-carrier-protein] reductase, mitochondrial (357 aa).

The transit peptide at 1-19 (MLRRGFLSRINAAQWSRQM) directs the protein to the mitochondrion. An Enoyl reductase (ER) domain is found at 36–352 (EVLQLVEDKL…FKGFTGKKYI (317 aa)). The active-site Proton donor is Y74. NADP(+) contacts are provided by residues N147, 173-176 (NSAV), 196-198 (RDR), 264-267 (YGGM), 289-291 (FWM), K349, and K350.

It belongs to the zinc-containing alcohol dehydrogenase family. Quinone oxidoreductase subfamily. As to quaternary structure, homodimer. In terms of tissue distribution, expressed in the central nervous system.

It localises to the mitochondrion. It carries out the reaction a 2,3-saturated acyl-[ACP] + NADP(+) = a (2E)-enoyl-[ACP] + NADPH + H(+). Catalyzes the NADPH-dependent reduction of trans-2-enoyl thioesters in mitochondrial fatty acid synthesis (fatty acid synthesis type II). Fatty acid chain elongation in mitochondria uses acyl carrier protein (ACP) as an acyl group carrier, but the enzyme accepts both ACP and CoA thioesters as substrates in vitro. Involved in iron homeostasis; affecting Fe-S cluster assembly and ceramide metabolism. Required for proper morphology and bioenergetic functions of mitochondria. Required for maintenance of neurons, including photoreceptor neurons. The polypeptide is Enoyl-[acyl-carrier-protein] reductase, mitochondrial (Drosophila melanogaster (Fruit fly)).